An 890-amino-acid polypeptide reads, in one-letter code: Alanine--tRNA ligase (890 aa).

Residues His-573, His-577, Cys-675, and His-679 each coordinate Zn(2+).

This sequence belongs to the class-II aminoacyl-tRNA synthetase family. Requires Zn(2+) as cofactor.

The protein resides in the cytoplasm. The enzyme catalyses tRNA(Ala) + L-alanine + ATP = L-alanyl-tRNA(Ala) + AMP + diphosphate. In terms of biological role, catalyzes the attachment of alanine to tRNA(Ala) in a two-step reaction: alanine is first activated by ATP to form Ala-AMP and then transferred to the acceptor end of tRNA(Ala). Also edits incorrectly charged Ser-tRNA(Ala) and Gly-tRNA(Ala) via its editing domain. The protein is Alanine--tRNA ligase of Streptomyces avermitilis (strain ATCC 31267 / DSM 46492 / JCM 5070 / NBRC 14893 / NCIMB 12804 / NRRL 8165 / MA-4680).